The sequence spans 239 residues: 7-cyano-7-deazaguanine synthase (239 aa).

16–26 (FSGGQDSTTCL) serves as a coordination point for ATP. Positions 204, 219, 222, and 225 each coordinate Zn(2+).

This sequence belongs to the QueC family. Zn(2+) is required as a cofactor.

It carries out the reaction 7-carboxy-7-deazaguanine + NH4(+) + ATP = 7-cyano-7-deazaguanine + ADP + phosphate + H2O + H(+). It participates in purine metabolism; 7-cyano-7-deazaguanine biosynthesis. In terms of biological role, catalyzes the ATP-dependent conversion of 7-carboxy-7-deazaguanine (CDG) to 7-cyano-7-deazaguanine (preQ(0)). This chain is 7-cyano-7-deazaguanine synthase, found in Polaromonas naphthalenivorans (strain CJ2).